Reading from the N-terminus, the 294-residue chain is FAD-dependent monooxygenase SAT1 (294 aa).

Residue D108 participates in FAD binding.

It belongs to the paxM FAD-dependent monooxygenase family. It depends on FAD as a cofactor.

Its pathway is mycotoxin biosynthesis. Its function is as follows. FAD-dependent monooxygenase; part of the satratoxin SC1 cluster involved in the biosynthesis of satratoxins, trichothecene mycotoxins that are associated with human food poisonings. Satratoxins are suggested to be made by products of multiple gene clusters (SC1, SC2 and SC3) that encode 21 proteins in all, including polyketide synthases, acetyltransferases, and other enzymes expected to modify the trichothecene skeleton. SC1 encodes 10 proteins, SAT1 to SAT10. The largest are SAT8, which encodes a putative polyketide synthase (PKS) with a conventional non-reducing architecture, and SAT10, a putative protein containing four ankyrin repeats and thus may be involved in protein scaffolding. The putative short-chain reductase SAT3 may assist the PKS in some capacity. SAT6 contains a secretory lipase domain and acts probably as a trichothecene esterase. SAT5 encodes a putative acetyltransferase, and so, with SAT6, may affect endogenous protection from toxicity. The probable transcription factor SAT9 may regulate the expression of the SC1 cluster. SC2 encodes proteins SAT11 to SAT16, the largest of which encodes the putative reducing PKS SAT13. SAT11 is a cytochrome P450 monooxygenase, while SAT14 and SAT16 are probable acetyltransferases. The SC2 cluster may be regulated by the transcription factor SAT15. SC3 is a small cluster that encodes 5 proteins, SAT17 to SAT21. SAT21 is a putative MFS-type transporter which may have a role in exporting secondary metabolites. The four other proteins putatively encoded in SC3 include the taurine hydroxylase-like protein SAT17, the O-methyltransferase SAT18, the acetyltransferase SAT19, and the Cys6-type zinc finger SAT20, the latter being probably involved in regulation of SC3 expression. In Stachybotrys chartarum (strain CBS 109288 / IBT 7711) (Toxic black mold), this protein is FAD-dependent monooxygenase SAT1.